Here is a 359-residue protein sequence, read N- to C-terminus: 3-dehydroquinate synthase (359 aa).

NAD(+)-binding positions include 106–110 (GVVGD), 130–131 (TT), Lys-143, Lys-152, and 170–173 (TLQT). Positions 185, 248, and 265 each coordinate Zn(2+).

Belongs to the sugar phosphate cyclases superfamily. Dehydroquinate synthase family. Co(2+) is required as a cofactor. It depends on Zn(2+) as a cofactor. Requires NAD(+) as cofactor.

The protein localises to the cytoplasm. The enzyme catalyses 7-phospho-2-dehydro-3-deoxy-D-arabino-heptonate = 3-dehydroquinate + phosphate. It functions in the pathway metabolic intermediate biosynthesis; chorismate biosynthesis; chorismate from D-erythrose 4-phosphate and phosphoenolpyruvate: step 2/7. Catalyzes the conversion of 3-deoxy-D-arabino-heptulosonate 7-phosphate (DAHP) to dehydroquinate (DHQ). This Desulforamulus reducens (strain ATCC BAA-1160 / DSM 100696 / MI-1) (Desulfotomaculum reducens) protein is 3-dehydroquinate synthase.